The sequence spans 145 residues: Photosystem I reaction center subunit VI-1, chloroplastic (145 aa).

The N-terminal 50 residues, 1-50 (MASLATVAAVKPSAAIKGLGGSSLAGAKLSIKPSRLSFKPKSIRANGVVA), are a transit peptide targeting the chloroplast. A helical membrane pass occupies residues 102–118 (LLLKFLILGGGSLLTYV).

Belongs to the psaH family.

It is found in the plastid. The protein resides in the chloroplast thylakoid membrane. Its function is as follows. Possible role could be the docking of the LHC I antenna complex to the core complex. The protein is Photosystem I reaction center subunit VI-1, chloroplastic (PSAH1) of Arabidopsis thaliana (Mouse-ear cress).